The primary structure comprises 263 residues: Purine nucleoside phosphorylase SACOL1200 (263 aa).

Residues H79, C124, and H141 each coordinate Zn(2+).

The protein belongs to the purine nucleoside phosphorylase YfiH/LACC1 family. Homodimer. Cu(2+) serves as cofactor. Requires Zn(2+) as cofactor.

It catalyses the reaction adenosine + phosphate = alpha-D-ribose 1-phosphate + adenine. The enzyme catalyses S-methyl-5'-thioadenosine + phosphate = 5-(methylsulfanyl)-alpha-D-ribose 1-phosphate + adenine. The catalysed reaction is inosine + phosphate = alpha-D-ribose 1-phosphate + hypoxanthine. It carries out the reaction adenosine + H2O + H(+) = inosine + NH4(+). Its function is as follows. Purine nucleoside enzyme that catalyzes the phosphorolysis of adenosine and inosine nucleosides, yielding D-ribose 1-phosphate and the respective free bases, adenine and hypoxanthine. Also catalyzes the phosphorolysis of S-methyl-5'-thioadenosine into adenine and S-methyl-5-thio-alpha-D-ribose 1-phosphate. Also has adenosine deaminase activity. The polypeptide is Purine nucleoside phosphorylase SACOL1200 (Staphylococcus aureus (strain COL)).